The primary structure comprises 830 residues: Kinesin-like protein KIN-14B (830 aa).

The stretch at 56–97 (ENISDDNTESEAKVQKIQDELVSLNAQLKQITLQRREALNNY) forms a coiled coil. The Kinesin motor domain occupies 103–425 (NIRVFCRIRP…LGFATRVRSI (323 aa)). 182–189 (GQTGSGKT) is an ATP binding site. Positions 434–476 (EMKARKETLLIDLGQKVNDLEHECEDIRRKIKNLEESMEHLTG) form a coiled coil.

This sequence belongs to the TRAFAC class myosin-kinesin ATPase superfamily. Kinesin family. KIN-14 subfamily.

The polypeptide is Kinesin-like protein KIN-14B (Oryza sativa subsp. japonica (Rice)).